The sequence spans 540 residues: Pentatricopeptide repeat-containing protein At3g29290 (540 aa).

12 PPR repeats span residues 106–140, 141–175, 177–205, 213–247, 248–282, 283–317, 318–352, 353–387, 389–423, 424–458, 459–487, and 489–523; these read NEETLSKRLRKLSRLDKVRSALELFDSMRFLGLQP, NAHACNSFLSCLLRNGDIQKAFTVFEFMRKKENVT, HTYSLMLKAVAEVKGCESALRMFRELERE, DVVLYNTAISLCGRINNVYETERIWRVMKGDGHIG, TEITYSLLVSIFVRCGRSELALDVYDEMVNNKISL, REDAMYAMISACTKEEKWDLALKIFQSMLKKGMKP, NLVACNTLINSLGKAGKVGLVFKVYSVLKSLGHKP, DEYTWNALLTALYKANRYEDVLQLFDMIRSENLCC, NEYLYNTAMVSCQKLGYWEKAVKLLYEMEGSGLTV, STSSYNLVISACEKSRKSKVALLVYEHMAQRDCKP, NTFTYLSLVRSCIWGSLWDEVEDILKKVE, and DVSLYNAAIHGMCLRREFKFAKELYVKMREMGLEP.

It belongs to the PPR family. P subfamily.

This chain is Pentatricopeptide repeat-containing protein At3g29290 (EMB2076), found in Arabidopsis thaliana (Mouse-ear cress).